A 1558-amino-acid chain; its full sequence is Eukaryotic translation initiation factor 2-alpha kinase 1 (1558 aa).

Residues F429–L789 form the Protein kinase domain. ATP contacts are provided by residues L435–V443 and K458. D660 (proton acceptor) is an active-site residue. Positions G1014–I1033 are disordered.

It belongs to the protein kinase superfamily. Ser/Thr protein kinase family. GCN2 subfamily. Post-translationally, auto-phosphorylated.

The enzyme catalyses L-seryl-[protein] + ATP = O-phospho-L-seryl-[protein] + ADP + H(+). It carries out the reaction L-threonyl-[protein] + ATP = O-phospho-L-threonyl-[protein] + ADP + H(+). In terms of biological role, in blood stage parasites, phosphorylates translation factor eIF2alpha in response to amino acid starvation. During the asexual blood stage, involved in the response to the host hormone melatonin which is used by the parasite to modulate its cell cycle. The polypeptide is Eukaryotic translation initiation factor 2-alpha kinase 1 (Plasmodium falciparum (isolate 3D7)).